Here is an 823-residue protein sequence, read N- to C-terminus: DNA mismatch repair protein MutS (823 aa).

Residue 605-612 coordinates ATP; that stretch reads GPNMSGKS.

It belongs to the DNA mismatch repair MutS family.

Functionally, this protein is involved in the repair of mismatches in DNA. It is possible that it carries out the mismatch recognition step. This protein has a weak ATPase activity. The sequence is that of DNA mismatch repair protein MutS from Fervidobacterium nodosum (strain ATCC 35602 / DSM 5306 / Rt17-B1).